The chain runs to 700 residues: non-specific serine/threonine protein kinase Cdc7 (700 aa).

Residues 127–644 (FDVHSRIGNG…AEEALKHPFF (518 aa)) form the Protein kinase domain. ATP-binding positions include 133–141 (IGNGTFSTV) and K163. The Proton acceptor role is filled by D250.

Belongs to the protein kinase superfamily. Ser/Thr protein kinase family. Component of the Dbf4-dependent kinase (DDK) complex consisting of Cdc7 and the Dbf4 ortholog chif. Interacts with chif (via the processed polypeptide Chiffon-A); the interaction is direct.

The catalysed reaction is L-seryl-[protein] + ATP = O-phospho-L-seryl-[protein] + ADP + H(+). It catalyses the reaction L-threonyl-[protein] + ATP = O-phospho-L-threonyl-[protein] + ADP + H(+). Activated by chif. Inhibited by the synthetic compound XL413. Functionally, catalytic component of the Dbf4-dependent kinase (DDK) complex. Phosphorylates components of the pre-replication complex, including Mcm2 and, to a lesser extent, Mcm4. Phosphorylates histones, including H3 and H2B. Required for DNA replication and mitotic proliferation, including during the endoreplication and amplification stages of DNA replication in egg chamber follicle cells of the ovary. In Drosophila melanogaster (Fruit fly), this protein is non-specific serine/threonine protein kinase Cdc7.